A 178-amino-acid chain; its full sequence is Endoribonuclease YbeY (178 aa).

Zn(2+) contacts are provided by His-118, His-122, and His-128. Positions 158 to 178 (ADRQSEKDRRLLDKSRYFDEP) are disordered.

This sequence belongs to the endoribonuclease YbeY family. The cofactor is Zn(2+).

It is found in the cytoplasm. Single strand-specific metallo-endoribonuclease involved in late-stage 70S ribosome quality control and in maturation of the 3' terminus of the 16S rRNA. This chain is Endoribonuclease YbeY, found in Mycolicibacterium smegmatis (strain ATCC 700084 / mc(2)155) (Mycobacterium smegmatis).